The following is a 200-amino-acid chain: Sorting nexin-10 (200 aa).

Residues 8–125 (EEFVSVWVRD…SLHLFLQSHL (118 aa)) are required for interaction with ATP6V1D. The PX domain maps to 10-127 (FVSVWVRDPR…HLFLQSHLNS (118 aa)). A 1,2-diacyl-sn-glycero-3-phospho-(1D-myo-inositol-3-phosphate) contacts are provided by R53, K79, and R94. Over residues 156–167 (FPEEEEGKKEND) the composition is skewed to basic and acidic residues. The disordered stretch occupies residues 156 to 200 (FPEEEEGKKENDIDYDSESSSSGFGHSSDDSSSHGCKMSTAPQES).

It belongs to the sorting nexin family. Interacts with ATP6V1D; may play a role in ciliogenesis.

It localises to the cytoplasm. The protein localises to the endosome membrane. Its subcellular location is the cytoskeleton. The protein resides in the microtubule organizing center. It is found in the centrosome. Functionally, probable phosphoinositide-binding protein involved in protein sorting and membrane trafficking in endosomes. Plays a role in cilium biogenesis through regulation of the transport and the localization of proteins to the cilium. Required for the localization to the cilium of V-ATPase subunit ATP6V1D and ATP6V0D1, and RAB8A. Involved in osteoclast differentiation and therefore bone resorption. The sequence is that of Sorting nexin-10 (SNX10) from Bos taurus (Bovine).